The chain runs to 518 residues: Macrophage receptor MARCO (518 aa).

At 1-48 the chain is on the cytoplasmic side; it reads MGSKELLKEEDFLGSTEDRADFDQAMFPVMETFEINDPVPKKRNGGTF. Residues 49 to 69 form a helical; Signal-anchor for type II membrane protein membrane-spanning segment; sequence CMAVMAIHLILLTAGTALLLI. Topologically, residues 70 to 518 are extracellular; it reads QVLNLQEQLQ…HNEDAGVECS (449 aa). Residues N87 and N138 are each glycosylated (N-linked (GlcNAc...) asparagine). The interval 147-426 is disordered; sequence QIKGERGSPG…GESFQRVRIM (280 aa). The Collagen-like domain occupies 149 to 418; that stretch reads KGERGSPGPK…QKGEKGQKGE (270 aa). Positions 154–163 are enriched in low complexity; that stretch reads SPGPKGAPGA. The segment covering 239-250 has biased composition (basic and acidic residues); that stretch reads KGEHGTKGDKGD. 2 stretches are compositionally biased toward low complexity: residues 293-314 and 325-344; these read PGVK…QGAP and RTGL…PGIA. Over residues 410–421 the composition is skewed to basic and acidic residues; it reads KGEKGQKGESFQ. The SRCR domain maps to 423–518; the sequence is VRIMGGTNRG…HNEDAGVECS (96 aa). Intrachain disulfides connect C446/C507, C459/C517, and C487/C497.

Homotrimer; disulfide-linked. Trimers may assemble in larger oligomers thus resulting in the creation of a large surface capable of interacting with very large ligands. N-glycosylated. As to expression, expressed in subpopulations of macrophages in the spleen and the medullary cord of lymph nodes (at protein level).

The protein resides in the cell membrane. Functionally, pattern recognition receptor (PRR) which binds Gram-positive and Gram-negative bacteria. Also plays a role in binding of unopsonized particles by alveolar macrophages. Binds to the secretoglobin SCGB3A2. The polypeptide is Macrophage receptor MARCO (Marco) (Mus musculus (Mouse)).